A 93-amino-acid chain; its full sequence is Alpha-defensin 16 (93 aa).

The signal sequence occupies residues 1 to 19; it reads MKTLILLSALVLLAFQVQA. Positions 20–58 are excised as a propeptide; sequence DPIQNTDEETKTEEQPGEEDQAVSVSFGDPEGTSLQEES. The disordered stretch occupies residues 22–54; it reads IQNTDEETKTEEQPGEEDQAVSVSFGDPEGTSL. Intrachain disulfides connect cysteine 64–cysteine 92, cysteine 66–cysteine 81, and cysteine 71–cysteine 91.

It belongs to the alpha-defensin family. In terms of tissue distribution, paneth cells of the small bowel.

The protein localises to the secreted. In terms of biological role, probably contributes to the antimicrobial barrier function of the small bowel mucosa. This is Alpha-defensin 16 (Defa16) from Mus musculus (Mouse).